A 194-amino-acid polypeptide reads, in one-letter code: Large ribosomal subunit protein bL9 (194 aa).

Positions 156 to 167 (RGEDISSRREDQ) are enriched in basic and acidic residues. The tract at residues 156–194 (RGEDISSRREDQDAAAEAIAAAGEFFDPDAQQDEEPEQQ) is disordered. A compositionally biased stretch (acidic residues) spans 181–194 (FDPDAQQDEEPEQQ).

Belongs to the bacterial ribosomal protein bL9 family.

Binds to the 23S rRNA. The polypeptide is Large ribosomal subunit protein bL9 (Rhodopseudomonas palustris (strain BisB5)).